The following is a 447-amino-acid chain: Serine/threonine-protein phosphatase 2A 55 kDa regulatory subunit B gamma isoform (447 aa).

WD repeat units lie at residues 22-61 (TEADVISTVEFNHTGELLATGDKGGRVVIFQREPESKNAP), 87-128 (EIEE…KRPE), 171-209 (GHTYHINSISVNSDCETYMSADDLRINLWHLAITDRSFN), 220-260 (DLTE…LCDK), 279-317 (EIISSVSDVKFSHSGRYMLTRDYLTVKVWDLNMEARPIE), 334-375 (ESDC…DVTL), and 410-446 (DFTKKILHTAWHPAENIIAIAATNNLYIFQDKVNSDM).

It belongs to the phosphatase 2A regulatory subunit B family. In terms of assembly, PP2A consists of a common heterodimeric core enzyme, composed of a 36 kDa catalytic subunit (subunit C) and a 65 kDa constant regulatory subunit (PR65 or subunit A), that associates with a variety of regulatory subunits. Proteins that associate with the core dimer include three families of regulatory subunits B (the R2/B/PR55/B55, R3/B''/PR72/PR130/PR59 and R5/B'/B56 families), the 48 kDa variable regulatory subunit, viral proteins, and cell signaling molecules. Interacts with IER5.

Functionally, the B regulatory subunit might modulate substrate selectivity and catalytic activity, and might also direct the localization of the catalytic enzyme to a particular subcellular compartment. The polypeptide is Serine/threonine-protein phosphatase 2A 55 kDa regulatory subunit B gamma isoform (Ppp2r2c) (Mus musculus (Mouse)).